We begin with the raw amino-acid sequence, 652 residues long: DNA ligase (652 aa).

NAD(+)-binding positions include 29–33, 78–79, and Glu107; these read DAEYD and SL. Catalysis depends on Lys109, which acts as the N6-AMP-lysine intermediate. Positions 130, 164, 278, and 302 each coordinate NAD(+). Residues Cys395, Cys398, Cys413, and Cys418 each coordinate Zn(2+). The BRCT domain occupies 577–652; that stretch reads DENAALSGMT…IKDEAWLESL (76 aa).

It belongs to the NAD-dependent DNA ligase family. LigA subfamily. Mg(2+) serves as cofactor. The cofactor is Mn(2+).

The catalysed reaction is NAD(+) + (deoxyribonucleotide)n-3'-hydroxyl + 5'-phospho-(deoxyribonucleotide)m = (deoxyribonucleotide)n+m + AMP + beta-nicotinamide D-nucleotide.. DNA ligase that catalyzes the formation of phosphodiester linkages between 5'-phosphoryl and 3'-hydroxyl groups in double-stranded DNA using NAD as a coenzyme and as the energy source for the reaction. It is essential for DNA replication and repair of damaged DNA. The polypeptide is DNA ligase (Streptococcus suis (strain 98HAH33)).